A 431-amino-acid polypeptide reads, in one-letter code: E3 ubiquitin-protein ligase marc-3 (431 aa).

An RING-CH-type zinc finger spans residues 5–74 (NASLGPAVCR…EICKFAFKIK (70 aa)). Zn(2+) is bound by residues C13, C16, C38, C40, H48, C51, C64, and C67. A run of 2 helical transmembrane segments spans residues 98-118 (PFID…GVFM) and 157-177 (LFLF…VSAL). Disordered stretches follow at residues 267-289 (TSPD…FGRR) and 327-349 (SRAT…RDMR). Basic and acidic residues predominate over residues 273–282 (NTHHHDESRN).

It is found in the cell membrane. The protein localises to the endosome membrane. The enzyme catalyses S-ubiquitinyl-[E2 ubiquitin-conjugating enzyme]-L-cysteine + [acceptor protein]-L-lysine = [E2 ubiquitin-conjugating enzyme]-L-cysteine + N(6)-ubiquitinyl-[acceptor protein]-L-lysine.. It participates in protein modification; protein ubiquitination. Its function is as follows. E3 ubiquitin-protein ligase which positively regulates the fast polyspermy block during fertilization, preventing entry of more than one sperm into the oocyte. After fertilization, required in the zygote for the selective degradation of a subset of maternal membrane proteins including cav-1, chs-1 and rme-2, probably by mediating their K63-linked polyubiquitination. In Caenorhabditis elegans, this protein is E3 ubiquitin-protein ligase marc-3.